We begin with the raw amino-acid sequence, 188 residues long: Methylamine dehydrogenase light chain (188 aa).

Positions 1–57 (MLGNFRFDDMVEKLSRRVAGQTSRRSVIGKLGTAMLGIGLVPLLPVDRRGRVSRANA) form a signal peptide, tat-type signal. Disulfide bonds link C80/C145, C86/C118, C93/C178, C95/C143, C103/C134, and C135/C166. Residue W114 is modified to Tryptophylquinone. A cross-link (tryptophan tryptophylquinone (Trp-Trp)) is located at residues 114–165 (WVASCYNPTDGQSYLIAYRDCCGYNVSGRCPCLNTEGELPVYRPEFANDIIW).

It belongs to the aromatic amine dehydrogenase light chain family. Heterotetramer of two light and two heavy chains. It depends on tryptophan tryptophylquinone residue as a cofactor. Post-translationally, predicted to be exported by the Tat system. The position of the signal peptide cleavage has not been experimentally proven. In terms of processing, tryptophan tryptophylquinone (TTQ) is formed by oxidation of the indole ring of a tryptophan to form tryptophylquinone followed by covalent cross-linking with another tryptophan residue.

The protein resides in the periplasm. It catalyses the reaction 2 oxidized [amicyanin] + methylamine + H2O = 2 reduced [amicyanin] + formaldehyde + NH4(+) + 2 H(+). Its pathway is one-carbon metabolism; methylamine degradation; formaldehyde from methylamine: step 1/1. Methylamine dehydrogenase carries out the oxidation of methylamine. Electrons are passed from methylamine dehydrogenase to amicyanin. The polypeptide is Methylamine dehydrogenase light chain (mauA) (Paracoccus denitrificans).